The chain runs to 201 residues: Probable nicotinate-nucleotide adenylyltransferase (201 aa).

It belongs to the NadD family.

The enzyme catalyses nicotinate beta-D-ribonucleotide + ATP + H(+) = deamido-NAD(+) + diphosphate. It functions in the pathway cofactor biosynthesis; NAD(+) biosynthesis; deamido-NAD(+) from nicotinate D-ribonucleotide: step 1/1. Functionally, catalyzes the reversible adenylation of nicotinate mononucleotide (NaMN) to nicotinic acid adenine dinucleotide (NaAD). The sequence is that of Probable nicotinate-nucleotide adenylyltransferase from Clostridium botulinum (strain Okra / Type B1).